Here is a 188-residue protein sequence, read N- to C-terminus: Elongation factor P (188 aa).

This sequence belongs to the elongation factor P family.

The protein resides in the cytoplasm. It participates in protein biosynthesis; polypeptide chain elongation. Its function is as follows. Involved in peptide bond synthesis. Stimulates efficient translation and peptide-bond synthesis on native or reconstituted 70S ribosomes in vitro. Probably functions indirectly by altering the affinity of the ribosome for aminoacyl-tRNA, thus increasing their reactivity as acceptors for peptidyl transferase. The protein is Elongation factor P of Saccharopolyspora erythraea (strain ATCC 11635 / DSM 40517 / JCM 4748 / NBRC 13426 / NCIMB 8594 / NRRL 2338).